A 154-amino-acid polypeptide reads, in one-letter code: Crossover junction endodeoxyribonuclease RuvC (154 aa).

Catalysis depends on residues Asp7, Glu67, and Asp139. 3 residues coordinate Mg(2+): Asp7, Glu67, and Asp139.

This sequence belongs to the RuvC family. Homodimer which binds Holliday junction (HJ) DNA. The HJ becomes 2-fold symmetrical on binding to RuvC with unstacked arms; it has a different conformation from HJ DNA in complex with RuvA. In the full resolvosome a probable DNA-RuvA(4)-RuvB(12)-RuvC(2) complex forms which resolves the HJ. Requires Mg(2+) as cofactor.

The protein resides in the cytoplasm. The catalysed reaction is Endonucleolytic cleavage at a junction such as a reciprocal single-stranded crossover between two homologous DNA duplexes (Holliday junction).. In terms of biological role, the RuvA-RuvB-RuvC complex processes Holliday junction (HJ) DNA during genetic recombination and DNA repair. Endonuclease that resolves HJ intermediates. Cleaves cruciform DNA by making single-stranded nicks across the HJ at symmetrical positions within the homologous arms, yielding a 5'-phosphate and a 3'-hydroxyl group; requires a central core of homology in the junction. The consensus cleavage sequence is 5'-(A/T)TT(C/G)-3'. Cleavage occurs on the 3'-side of the TT dinucleotide at the point of strand exchange. HJ branch migration catalyzed by RuvA-RuvB allows RuvC to scan DNA until it finds its consensus sequence, where it cleaves and resolves the cruciform DNA. This chain is Crossover junction endodeoxyribonuclease RuvC, found in Prochlorococcus marinus (strain NATL2A).